The sequence spans 177 residues: NADH-quinone oxidoreductase subunit B (177 aa).

The [4Fe-4S] cluster site is built by C56, C57, C121, and C151.

This sequence belongs to the complex I 20 kDa subunit family. In terms of assembly, NDH-1 is composed of 14 different subunits. Subunits NuoB, C, D, E, F, and G constitute the peripheral sector of the complex. Requires [4Fe-4S] cluster as cofactor.

It is found in the cell inner membrane. It carries out the reaction a quinone + NADH + 5 H(+)(in) = a quinol + NAD(+) + 4 H(+)(out). Its function is as follows. NDH-1 shuttles electrons from NADH, via FMN and iron-sulfur (Fe-S) centers, to quinones in the respiratory chain. Couples the redox reaction to proton translocation (for every two electrons transferred, four hydrogen ions are translocated across the cytoplasmic membrane), and thus conserves the redox energy in a proton gradient. The chain is NADH-quinone oxidoreductase subunit B from Jannaschia sp. (strain CCS1).